We begin with the raw amino-acid sequence, 305 residues long: Probable G-protein coupled receptor 141 (305 aa).

The Extracellular segment spans residues 1-22; the sequence is MPGHNTSRNSSCDPIVTPHLIS. 2 N-linked (GlcNAc...) asparagine glycosylation sites follow: Asn5 and Asn9. Residues 23 to 43 traverse the membrane as a helical segment; the sequence is LYFIVLIGGLVGVISILFLLV. Topologically, residues 44–50 are cytoplasmic; the sequence is KMNTRSV. A helical transmembrane segment spans residues 51–71; that stretch reads TTMAVINLVVVHSVFLLTVPF. Residues 72–89 are Extracellular-facing; sequence RLTYLIKKTWMFGLPFCK. The helical transmembrane segment at 90 to 110 threads the bilayer; that stretch reads FVSAMLHIHMYLTFLFYVVIL. Topologically, residues 111–131 are cytoplasmic; that stretch reads VTRYLIFFKCKDKVEFYRKLH. Residues 132-152 traverse the membrane as a helical segment; sequence AVAASAGMWTLVIVIVVPLVV. Topologically, residues 153 to 183 are extracellular; it reads SRYGIHEEYNEEHCFKFHKELAYTYVKIINY. A helical membrane pass occupies residues 184–204; the sequence is MIVIFVIAVAVILLVFQVFII. Topologically, residues 205–227 are cytoplasmic; it reads MLMVQKLRHSLLSHQEFWAQLKN. The helical transmembrane segment at 228 to 248 threads the bilayer; it reads LFFIGVILVCFLPYQFFRIYY. At 249–267 the chain is on the extracellular side; the sequence is LNVVTHSNACNSKVAFYNE. Residues 268–288 traverse the membrane as a helical segment; it reads IFLSVTAISCYDLLLFVFGGS. Over 289–305 the chain is Cytoplasmic; it reads HWFKQKIIGLWNCVLCR.

The protein belongs to the G-protein coupled receptor 1 family.

The protein resides in the cell membrane. In terms of biological role, orphan receptor. This Homo sapiens (Human) protein is Probable G-protein coupled receptor 141 (GPR141).